The following is an 82-amino-acid chain: Small ribosomal subunit protein bS18 (82 aa).

Residues 1–20 (MVDINQIPTRRPFHRRRKTC) are disordered.

Belongs to the bacterial ribosomal protein bS18 family. Part of the 30S ribosomal subunit. Forms a tight heterodimer with protein bS6.

Its function is as follows. Binds as a heterodimer with protein bS6 to the central domain of the 16S rRNA, where it helps stabilize the platform of the 30S subunit. The polypeptide is Small ribosomal subunit protein bS18 (Brucella abortus (strain 2308)).